Here is a 119-residue protein sequence, read N- to C-terminus: Developmental pluripotency-associated protein 5B/5C (119 aa).

The region spanning 24-86 is the KH; atypical domain; that stretch reads PEVFQVQSLV…SIKVRAKWLL (63 aa).

This sequence belongs to the KHDC1 family.

It localises to the cytoplasm. In terms of biological role, involved in the maintenance of embryonic stem (ES) cell pluripotency. Dispensable for self-renewal of pluripotent ES cells and establishment of germ cells. Associates with specific target mRNAs. The protein is Developmental pluripotency-associated protein 5B/5C of Mus musculus (Mouse).